Reading from the N-terminus, the 466-residue chain is Oryzain beta chain (466 aa).

The signal sequence occupies residues 1–21 (MAARAAAAAFLLLLIVGAATA). The propeptide at 22 to 140 (APDMSIISYN…ERYRHDGVEE (119 aa)) is activation peptide. Disulfide bonds link C162–C205, C196–C238, and C296–C347. C165 is an active-site residue. Catalysis depends on residues H302 and N322. N-linked (GlcNAc...) asparagine glycosylation is present at N341. Residues 358 to 380 (KSGANPPKPSPTPPTPPTPPPPS) form a disordered region. Positions 362 to 466 (NPPKPSPTPP…KRTLAKLNTA (105 aa)) are cleaved as a propeptide — removed in mature form. A compositionally biased stretch (pro residues) spans 363–380 (PPKPSPTPPTPPTPPPPS). Intrachain disulfides connect C386/C398 and C392/C413. N389 is a glycosylation site (N-linked (GlcNAc...) asparagine).

The protein belongs to the peptidase C1 family. In terms of tissue distribution, expressed only in seeds.

Functionally, probable thiol protease. In Oryza sativa subsp. japonica (Rice), this protein is Oryzain beta chain.